Consider the following 189-residue polypeptide: uncharacterized protein (189 aa).

The 61-residue stretch at 9–69 folds into the HTH tetR-type domain; the sequence is ADTGGRILRA…SMLTSHIADV (61 aa). Positions 32-51 form a DNA-binding region, H-T-H motif; sequence TLAEIARRAGVSRPTVYRRW.

This is an uncharacterized protein from Mycobacterium tuberculosis (strain CDC 1551 / Oshkosh).